A 361-amino-acid chain; its full sequence is 3-dehydroquinate synthase (361 aa).

NAD(+) contacts are provided by residues 104–108 (GVIGD), 128–129 (TT), Lys140, and Lys149. 3 residues coordinate Zn(2+): Glu182, His245, and His262.

It belongs to the sugar phosphate cyclases superfamily. Dehydroquinate synthase family. The cofactor is NAD(+). Co(2+) serves as cofactor. Requires Zn(2+) as cofactor.

The protein resides in the cytoplasm. The catalysed reaction is 7-phospho-2-dehydro-3-deoxy-D-arabino-heptonate = 3-dehydroquinate + phosphate. It participates in metabolic intermediate biosynthesis; chorismate biosynthesis; chorismate from D-erythrose 4-phosphate and phosphoenolpyruvate: step 2/7. Its function is as follows. Catalyzes the conversion of 3-deoxy-D-arabino-heptulosonate 7-phosphate (DAHP) to dehydroquinate (DHQ). The sequence is that of 3-dehydroquinate synthase from Halalkalibacterium halodurans (strain ATCC BAA-125 / DSM 18197 / FERM 7344 / JCM 9153 / C-125) (Bacillus halodurans).